The primary structure comprises 280 residues: B3 domain-containing protein At5g25470 (280 aa).

The TF-B3 1 DNA-binding region spans 20-114 (WKSLSPGQNW…FLEVQIFKND (95 aa)). The disordered stretch occupies residues 122–153 (PPEVEPETEPFHPTTPKNSHKETTTASASASA). Positions 183–276 (YFVKTLTKGN…ELVTAVRVHF (94 aa)) form a DNA-binding region, TF-B3 2.

It is found in the nucleus. This chain is B3 domain-containing protein At5g25470, found in Arabidopsis thaliana (Mouse-ear cress).